The chain runs to 451 residues: Signal transduction histidine-protein kinase ArlS (451 aa).

The next 2 helical transmembrane spans lie at 11–31 (IIVT…IIIF) and 156–176 (IIAL…SYVF). One can recognise an HAMP domain in the interval 178-231 (TQITKPLVSLSNKMIEIRRDGFQNKLQLNTNYEEIDNLANTFNEMMSQIEESFN). Residues 239 to 451 (DASHELRTPL…NKGTTFKIIF (213 aa)) enclose the Histidine kinase domain. The residue at position 242 (His-242) is a Phosphohistidine; by autocatalysis.

In terms of processing, autophosphorylated.

The protein localises to the cell membrane. It catalyses the reaction ATP + protein L-histidine = ADP + protein N-phospho-L-histidine.. Its function is as follows. Member of the two-component regulatory system ArlS/ArlR involved in the regulation of adhesion, autolysis, multidrug resistance and virulence. ArlS probably functions as a sensor protein kinase which is autophosphorylated at a histidine residue and transfers its phosphate group to ArlR. The polypeptide is Signal transduction histidine-protein kinase ArlS (arlS) (Staphylococcus aureus (strain MRSA252)).